The chain runs to 226 residues: dTTP/UTP pyrophosphatase (226 aa).

The Proton acceptor role is filled by aspartate 85.

This sequence belongs to the Maf family. YhdE subfamily. Requires a divalent metal cation as cofactor.

The protein localises to the cytoplasm. It carries out the reaction dTTP + H2O = dTMP + diphosphate + H(+). It catalyses the reaction UTP + H2O = UMP + diphosphate + H(+). Nucleoside triphosphate pyrophosphatase that hydrolyzes dTTP and UTP. May have a dual role in cell division arrest and in preventing the incorporation of modified nucleotides into cellular nucleic acids. The protein is dTTP/UTP pyrophosphatase of Psychrobacter cryohalolentis (strain ATCC BAA-1226 / DSM 17306 / VKM B-2378 / K5).